The primary structure comprises 404 residues: Formate-dependent phosphoribosylglycinamide formyltransferase (404 aa).

N(1)-(5-phospho-beta-D-ribosyl)glycinamide is bound by residues 25–26 (EL) and glutamate 85. Residues arginine 118, lysine 159, 164 to 169 (SSGKGQ), 199 to 202 (EGFI), and glutamate 207 each bind ATP. The 196-residue stretch at 123-318 (RLAAEELGLP…EFELHARAIL (196 aa)) folds into the ATP-grasp domain. Mg(2+) contacts are provided by glutamate 277 and glutamate 289. N(1)-(5-phospho-beta-D-ribosyl)glycinamide contacts are provided by residues aspartate 296, lysine 365, and 372-373 (RR).

Belongs to the PurK/PurT family. In terms of assembly, homodimer.

The catalysed reaction is N(1)-(5-phospho-beta-D-ribosyl)glycinamide + formate + ATP = N(2)-formyl-N(1)-(5-phospho-beta-D-ribosyl)glycinamide + ADP + phosphate + H(+). It functions in the pathway purine metabolism; IMP biosynthesis via de novo pathway; N(2)-formyl-N(1)-(5-phospho-D-ribosyl)glycinamide from N(1)-(5-phospho-D-ribosyl)glycinamide (formate route): step 1/1. Functionally, involved in the de novo purine biosynthesis. Catalyzes the transfer of formate to 5-phospho-ribosyl-glycinamide (GAR), producing 5-phospho-ribosyl-N-formylglycinamide (FGAR). Formate is provided by PurU via hydrolysis of 10-formyl-tetrahydrofolate. The polypeptide is Formate-dependent phosphoribosylglycinamide formyltransferase (Burkholderia pseudomallei (strain 668)).